The following is a 691-amino-acid chain: POU domain, class 6, transcription factor 2 (691 aa).

The segment covering 25-36 (MNAELRGEDKAA) has biased composition (basic and acidic residues). Disordered regions lie at residues 25–93 (MNAE…PVGP), 186–297 (LQQQ…LQLV), and 435–461 (SQAS…SALS). A compositionally biased stretch (low complexity) spans 186–195 (LQQQQQQQQQ). The segment covering 196–210 (QPPPSTNQHPQPAPQ) has biased composition (pro residues). The span at 211–220 (APSQSQQQPL) shows a compositional bias: low complexity. Pro residues predominate over residues 221–238 (QPTPPQQPPPASQQPPAP). Composition is skewed to low complexity over residues 239–280 (TSQL…SQSP) and 438–461 (SMSQ…SALS). The POU-specific domain occupies 476-586 (VDGVNLEEIR…VLERWMAEAE (111 aa)). The segment at residues 607 to 666 (KRKRRTSFTPQALEILNAHFEKNTHPSGQEMTEIAEKLNYDREVVRVWFCNKRQALKNTI) is a DNA-binding region (homeobox).

The protein belongs to the POU transcription factor family. Class-6 subfamily. In terms of tissue distribution, expressed only within the CNS, where its expression is restricted to the medical habenulla, to a dispersed population of neurons in the dorsal hypothalamus, and to subsets of ganglion and amacrine cells in the retina.

Its subcellular location is the nucleus. In terms of biological role, probable transcription factor likely to be involved in early steps in the differentiation of amacrine and ganglion cells. Recognizes and binds to the DNA sequence 5'-ATGCAAAT-3'. Isoform 1 does not bind DNA. The polypeptide is POU domain, class 6, transcription factor 2 (POU6F2) (Homo sapiens (Human)).